Consider the following 409-residue polypeptide: Pectin acetylesterase 4 (409 aa).

The signal sequence occupies residues 1–32 (MVIRSLLQCRTWSKSDWLLASIGIVLIVYSFS). Asparagine 36 and asparagine 163 each carry an N-linked (GlcNAc...) asparagine glycan. Active-site charge relay system residues include serine 199, aspartate 295, and histidine 362. 2 N-linked (GlcNAc...) asparagine glycosylation sites follow: asparagine 379 and asparagine 406.

The protein belongs to the pectinacetylesterase family.

It is found in the secreted. It localises to the cell wall. In terms of biological role, hydrolyzes acetyl esters in homogalacturonan regions of pectin. In type I primary cell wall, galacturonic acid residues of pectin can be acetylated at the O-2 and O-3 positions. Decreasing the degree of acetylation of pectin gels in vitro alters their physical properties. This chain is Pectin acetylesterase 4, found in Arabidopsis thaliana (Mouse-ear cress).